The following is a 223-amino-acid chain: Phosphoenolpyruvate guanylyltransferase (223 aa).

Residues T140, G156, and S159 each coordinate phosphoenolpyruvate.

The protein belongs to the CofC family.

The enzyme catalyses phosphoenolpyruvate + GTP + H(+) = enolpyruvoyl-2-diphospho-5'-guanosine + diphosphate. It participates in cofactor biosynthesis; coenzyme F420 biosynthesis. Guanylyltransferase that catalyzes the activation of phosphoenolpyruvate (PEP) as enolpyruvoyl-2-diphospho-5'-guanosine, via the condensation of PEP with GTP. It is involved in the biosynthesis of coenzyme F420, a hydride carrier cofactor. In Conexibacter woesei (strain DSM 14684 / CCUG 47730 / CIP 108061 / JCM 11494 / NBRC 100937 / ID131577), this protein is Phosphoenolpyruvate guanylyltransferase.